The sequence spans 166 residues: Urease accessory protein UreE 2 (166 aa).

The segment at 135-154 (EHGAYGGGHHHSRAGEEDFN) is disordered.

Belongs to the UreE family.

The protein resides in the cytoplasm. Involved in urease metallocenter assembly. Binds nickel. Probably functions as a nickel donor during metallocenter assembly. The protein is Urease accessory protein UreE 2 of Pseudomonas syringae pv. syringae (strain B728a).